A 106-amino-acid polypeptide reads, in one-letter code: Biogenesis of lysosome-related organelles complex 1 subunit 4 (106 aa).

The stretch at 53 to 106 (THSEGLSEQLKMTEKNILEMENLFDQIDQLCLFVQKAKSDLDKLEKLYNVVDRQ) forms a coiled coil.

This sequence belongs to the BLOC1S4 family. In terms of assembly, component of the biogenesis of lysosome-related organelles complex-1 (BLOC-1) composed at least of blos-1, blos-2, blos-4, dsbn-1, glo-2, mutd-1 and snpn-1. Interacts with glo-2.

In terms of biological role, component of the biogenesis of lysosome-related organelles complex-1 (BLOC-1) involved in gut granule biogenesis. The protein is Biogenesis of lysosome-related organelles complex 1 subunit 4 (blos-4) of Caenorhabditis elegans.